Reading from the N-terminus, the 570-residue chain is Sulfite reductase [NADPH] hemoprotein beta-component (570 aa).

[4Fe-4S] cluster-binding residues include Cys-434, Cys-440, Cys-479, and Cys-483. Cys-483 is a binding site for siroheme.

Belongs to the nitrite and sulfite reductase 4Fe-4S domain family. Alpha(8)-beta(8). The alpha component is a flavoprotein, the beta component is a hemoprotein. Requires siroheme as cofactor. [4Fe-4S] cluster is required as a cofactor.

The enzyme catalyses hydrogen sulfide + 3 NADP(+) + 3 H2O = sulfite + 3 NADPH + 4 H(+). Its pathway is sulfur metabolism; hydrogen sulfide biosynthesis; hydrogen sulfide from sulfite (NADPH route): step 1/1. In terms of biological role, component of the sulfite reductase complex that catalyzes the 6-electron reduction of sulfite to sulfide. This is one of several activities required for the biosynthesis of L-cysteine from sulfate. This is Sulfite reductase [NADPH] hemoprotein beta-component from Escherichia coli O7:K1 (strain IAI39 / ExPEC).